The chain runs to 217 residues: Cytidylate kinase (217 aa).

10–18 (GPAGAGKST) contributes to the ATP binding site.

It belongs to the cytidylate kinase family. Type 1 subfamily.

The protein resides in the cytoplasm. It catalyses the reaction CMP + ATP = CDP + ADP. The enzyme catalyses dCMP + ATP = dCDP + ADP. This chain is Cytidylate kinase, found in Clostridium botulinum (strain Langeland / NCTC 10281 / Type F).